Consider the following 363-residue polypeptide: 5-formaminoimidazole-4-carboxamide-1-(beta)-D-ribofuranosyl 5'-monophosphate synthetase (363 aa).

The 5-amino-1-(5-phospho-beta-D-ribosyl)imidazole-4-carboxamide site is built by H29 and S96. The ATP-grasp domain occupies 118–350; the sequence is RDILRWESER…MGRRVAREIR (233 aa). ATP-binding positions include 148–210 and E232; that span reads PEEI…TNFC. N260 serves as a coordination point for 5-amino-1-(5-phospho-beta-D-ribosyl)imidazole-4-carboxamide. Residues Q299 and E312 each contribute to the Mg(2+) site.

The protein belongs to the phosphohexose mutase family. The cofactor is Mg(2+). Requires Mn(2+) as cofactor.

The catalysed reaction is 5-amino-1-(5-phospho-beta-D-ribosyl)imidazole-4-carboxamide + formate + ATP = 5-formamido-1-(5-phospho-D-ribosyl)imidazole-4-carboxamide + ADP + phosphate. It participates in purine metabolism; IMP biosynthesis via de novo pathway; 5-formamido-1-(5-phospho-D-ribosyl)imidazole-4-carboxamide from 5-amino-1-(5-phospho-D-ribosyl)imidazole-4-carboxamide (formate route): step 1/1. Functionally, catalyzes the ATP- and formate-dependent formylation of 5-aminoimidazole-4-carboxamide-1-beta-d-ribofuranosyl 5'-monophosphate (AICAR) to 5-formaminoimidazole-4-carboxamide-1-beta-d-ribofuranosyl 5'-monophosphate (FAICAR) in the absence of folates. In Methanothermobacter thermautotrophicus (strain ATCC 29096 / DSM 1053 / JCM 10044 / NBRC 100330 / Delta H) (Methanobacterium thermoautotrophicum), this protein is 5-formaminoimidazole-4-carboxamide-1-(beta)-D-ribofuranosyl 5'-monophosphate synthetase.